The sequence spans 312 residues: Acetyl-coenzyme A carboxylase carboxyl transferase subunit alpha (312 aa).

Residues 36–286 (RLDKEVKSIY…KEYFLDALRT (251 aa)) enclose the CoA carboxyltransferase C-terminal domain.

Belongs to the AccA family. In terms of assembly, acetyl-CoA carboxylase is a heterohexamer composed of biotin carboxyl carrier protein (AccB), biotin carboxylase (AccC) and two subunits each of ACCase subunit alpha (AccA) and ACCase subunit beta (AccD).

The protein resides in the cytoplasm. It catalyses the reaction N(6)-carboxybiotinyl-L-lysyl-[protein] + acetyl-CoA = N(6)-biotinyl-L-lysyl-[protein] + malonyl-CoA. It functions in the pathway lipid metabolism; malonyl-CoA biosynthesis; malonyl-CoA from acetyl-CoA: step 1/1. Functionally, component of the acetyl coenzyme A carboxylase (ACC) complex. First, biotin carboxylase catalyzes the carboxylation of biotin on its carrier protein (BCCP) and then the CO(2) group is transferred by the carboxyltransferase to acetyl-CoA to form malonyl-CoA. The chain is Acetyl-coenzyme A carboxylase carboxyl transferase subunit alpha from Helicobacter pylori (strain ATCC 700392 / 26695) (Campylobacter pylori).